Consider the following 407-residue polypeptide: Methylthioribose kinase (407 aa).

ATP is bound by residues asparagine 40, lysine 57, and 111 to 113 (EDL). Aspartate 229 serves as a coordination point for substrate. 246–248 (DAE) lines the ATP pocket. Arginine 344 contributes to the substrate binding site.

This sequence belongs to the methylthioribose kinase family. In terms of assembly, homodimer.

The enzyme catalyses 5-(methylsulfanyl)-D-ribose + ATP = 5-(methylsulfanyl)-alpha-D-ribose 1-phosphate + ADP + H(+). Its pathway is amino-acid biosynthesis; L-methionine biosynthesis via salvage pathway; S-methyl-5-thio-alpha-D-ribose 1-phosphate from S-methyl-5'-thioadenosine (hydrolase route): step 2/2. Its function is as follows. Catalyzes the phosphorylation of methylthioribose into methylthioribose-1-phosphate. In Yersinia pseudotuberculosis serotype O:3 (strain YPIII), this protein is Methylthioribose kinase.